A 124-amino-acid polypeptide reads, in one-letter code: Small ribosomal subunit protein bS6 (124 aa).

The disordered stretch occupies residues 99–124; sequence PLPAPRIVPGSEPEPVEQQEAAAVEA. Positions 114–124 are enriched in low complexity; the sequence is VEQQEAAAVEA.

The protein belongs to the bacterial ribosomal protein bS6 family.

Functionally, binds together with bS18 to 16S ribosomal RNA. This chain is Small ribosomal subunit protein bS6, found in Prochlorococcus marinus (strain MIT 9303).